The sequence spans 362 residues: Golgi-resident adenosine 3',5'-bisphosphate 3'-phosphatase (362 aa).

Residue M1 is modified to N-acetylmethionine. Residues 1–12 lie on the Cytoplasmic side of the membrane; that stretch reads MAPMGIRLSPLG. Residues 13–33 traverse the membrane as a helical segment; that stretch reads VAVFCLLGLGVLYHLYSGFLA. The Lumenal segment spans residues 34–362; that stretch reads GRFSLFGLGG…LPDLEKTGHK (329 aa). A disordered region spans residues 88–109; it reads RESNVLHEKSKGKTREGADDKM. The active-site Proton acceptor is D113. Mg(2+)-binding residues include E136, D177, L179, and D180. T182 functions as the Proton acceptor in the catalytic mechanism. Residues S245 and H248 each contribute to the AMP site. Residue N262 is glycosylated (N-linked (GlcNAc...) asparagine). AMP is bound by residues G271 and K275. D303 contacts Mg(2+).

The protein belongs to the inositol monophosphatase superfamily. Requires Mg(2+) as cofactor. Contains N-linked glycan resistant to endoglycosydase H.

The protein resides in the golgi apparatus. It is found in the trans-Golgi network membrane. It catalyses the reaction adenosine 3',5'-bisphosphate + H2O = AMP + phosphate. The protein operates within sulfur metabolism. Its activity is regulated as follows. Strongly inhibited by lithium. In terms of biological role, exhibits 3'-nucleotidase activity toward adenosine 3',5'-bisphosphate (PAP), namely hydrolyzes adenosine 3',5'-bisphosphate into adenosine 5'-monophosphate (AMP) and a phosphate. May play a role in the formation of skeletal elements derived through endochondral ossification, possibly by clearing adenosine 3',5'-bisphosphate produced by Golgi sulfotransferases during glycosaminoglycan sulfation. Has no activity toward 3'-phosphoadenosine 5'-phosphosulfate (PAPS) or inositol phosphate (IP) substrates including I(1)P, I(1,4)P2, I(1,3,4)P3, I(1,4,5)P3 and I(1,3,4,5)P4. The protein is Golgi-resident adenosine 3',5'-bisphosphate 3'-phosphatase (BPNT2) of Bos taurus (Bovine).